Consider the following 363-residue polypeptide: Pyrimidine monooxygenase RutA (363 aa).

FMN is bound by residues 49 to 50, Asn-115, Glu-124, 140 to 141, and Ser-190; these read IK and RY.

The protein belongs to the NtaA/SnaA/DszA monooxygenase family. RutA subfamily.

The catalysed reaction is uracil + FMNH2 + NADH + O2 = (Z)-3-ureidoacrylate + FMN + NAD(+) + H2O + H(+). The enzyme catalyses thymine + FMNH2 + NADH + O2 = (Z)-2-methylureidoacrylate + FMN + NAD(+) + H2O + H(+). Functionally, catalyzes the pyrimidine ring opening between N-3 and C-4 by an unusual flavin hydroperoxide-catalyzed mechanism, adding oxygen atoms in the process to yield ureidoacrylate peracid, that immediately reacts with FMN forming ureidoacrylate and FMN-N(5)-oxide. The FMN-N(5)-oxide reacts spontaneously with NADH to produce FMN. Requires the flavin reductase RutF to regenerate FMN in vivo. This is Pyrimidine monooxygenase RutA from Enterobacter cloacae subsp. cloacae (strain ATCC 13047 / DSM 30054 / NBRC 13535 / NCTC 10005 / WDCM 00083 / NCDC 279-56).